The chain runs to 426 residues: Enolase (426 aa).

Q163 serves as a coordination point for (2R)-2-phosphoglycerate. Catalysis depends on E205, which acts as the Proton donor. Mg(2+) contacts are provided by D242, E286, and D313. (2R)-2-phosphoglycerate-binding residues include K338, R367, S368, and K389. The active-site Proton acceptor is the K338.

It belongs to the enolase family. Mg(2+) serves as cofactor.

It is found in the cytoplasm. The protein resides in the secreted. Its subcellular location is the cell surface. It carries out the reaction (2R)-2-phosphoglycerate = phosphoenolpyruvate + H2O. It participates in carbohydrate degradation; glycolysis; pyruvate from D-glyceraldehyde 3-phosphate: step 4/5. Functionally, catalyzes the reversible conversion of 2-phosphoglycerate (2-PG) into phosphoenolpyruvate (PEP). It is essential for the degradation of carbohydrates via glycolysis. The sequence is that of Enolase from Helicobacter pylori (strain Shi470).